Here is a 579-residue protein sequence, read N- to C-terminus: Pre-mRNA-processing factor 17 (579 aa).

Residues 1 to 19 (MSAAIAALAASYGSGSGSE) are compositionally biased toward low complexity. Disordered regions lie at residues 1–34 (MSAAIAALAASYGSGSGSESDSDSEGSRCPLPAA) and 204–237 (DVAKPSEEEQKELDEITAKRQKKGKQEEEKPGEE). WD repeat units follow at residues 286–326 (GHTK…RCLR), 330–369 (GHSKAVRDICFNTAGTQFLSAAYDRYLKLWDTETGQCISR), 371–413 (TNRK…IVQE), 416–455 (RHLGAVNTIVFVDENRRFVSTSDDKSLRVWEWDIPVDFKY), 459–498 (PSMHSMPAVTLSPNGKWLACQSMDNQILIFGAQNRFRLNK), 504–545 (GHMV…LYSR), and 548–578 (AHDKVCIGAVWHPHETSKVITCGWDGLIKLW).

As to quaternary structure, component of the catalytic spliceosome C complexes. Component of the postcatalytic spliceosome P complex. Interacts with PPIL1; this interaction leads to CDC40 isomerization. In terms of processing, undergoes isomerization of the peptide bond between Gly-94 and Pro-95. The reaction is catalyzed by PPIL1.

It localises to the nucleus. The protein localises to the nucleus speckle. In terms of biological role, required for pre-mRNA splicing as component of the activated spliceosome. Plays an important role in embryonic brain development; this function does not require proline peptide bond isomerization. The sequence is that of Pre-mRNA-processing factor 17 (Cdc40) from Mus musculus (Mouse).